The primary structure comprises 729 residues: Solute carrier family 15 member 2 (729 aa).

Residues Met1–Pro34 are disordered. Residues Met1–Arg57 lie on the Cytoplasmic side of the membrane. At Ser9 the chain carries Phosphoserine. A Phosphothreonine modification is found at Thr12. Ser28 bears the Phosphoserine mark. Residues Phe58–Asn78 form a helical membrane-spanning segment. At Glu79–His87 the chain is on the extracellular side. The chain crosses the membrane as a helical span at residues Ala88–Leu108. The Cytoplasmic portion of the chain corresponds to Gly109 to Thr113. A helical transmembrane segment spans residues Ile114–Pro134. Topologically, residues Ile135–Lys139 are extracellular. Residues Val140–Ile160 traverse the membrane as a helical segment. The Cytoplasmic segment spans residues Lys161–Tyr183. The chain crosses the membrane as a helical span at residues Phe184–Met204. Residues Leu205–Tyr217 are Extracellular-facing. The chain crosses the membrane as a helical span at residues Ala218 to Gly238. Topologically, residues Ser239–Asp295 are cytoplasmic. A helical membrane pass occupies residues Val296–Leu316. The Extracellular segment spans residues Asp317–Gln343. Residues Met344–Tyr364 traverse the membrane as a helical segment. Topologically, residues Arg365–Met380 are cytoplasmic. A helical membrane pass occupies residues Ala381–Ile401. Over Asn402–Gln611 the chain is Extracellular. Residues Asn402–Gln611 form an extracellular domain (ECD) region. Asn435, Asn472, Asn508, Asn528, and Asn587 each carry an N-linked (GlcNAc...) asparagine glycan. A helical transmembrane segment spans residues Leu612–Phe632. The Cytoplasmic portion of the chain corresponds to Ser633–Ser643. Residues Val644–Ala664 traverse the membrane as a helical segment. Residues Gln665–Glu674 lie on the Extracellular side of the membrane. Residues Phe675 to Tyr695 traverse the membrane as a helical segment. The Cytoplasmic segment spans residues Tyr696–Leu729.

This sequence belongs to the major facilitator superfamily. Proton-dependent oligopeptide transporter (POT/PTR) (TC 2.A.17) family. Interacts (via extracellular domain region) with trypsin. In terms of tissue distribution, strongly expressed in kidney. Also detected in brain, lung, liver and heart.

It localises to the apical cell membrane. Its subcellular location is the cytoplasmic vesicle. The protein localises to the phagosome membrane. The protein resides in the cell membrane. It catalyses the reaction a dipeptide(out) + 2 H(+)(out) = a dipeptide(in) + 2 H(+)(in). It carries out the reaction N-acetyl-D-muramoyl-L-alanyl-D-isoglutamine(out) + 3 H(+)(out) = N-acetyl-D-muramoyl-L-alanyl-D-isoglutamine(in) + 3 H(+)(in). The catalysed reaction is glycyl-L-leucine(out) + 2 H(+)(out) = glycyl-L-leucine(in) + 2 H(+)(in). The enzyme catalyses glycyl-L-lysine(out) + 2 H(+)(out) = glycyl-L-lysine(in) + 2 H(+)(in). It catalyses the reaction glycyl-L-glutamate(out) + 3 H(+)(out) = glycyl-L-glutamate(in) + 3 H(+)(in). It carries out the reaction L-alanyl-L-alanine(out) + 2 H(+)(out) = L-alanyl-L-alanine(in) + 2 H(+)(in). The catalysed reaction is an L-amino acid tripeptide(out) + 2 H(+)(out) = an L-amino acid tripeptide(in) + 2 H(+)(in). The enzyme catalyses carnosine(out) + 2 H(+)(out) = carnosine(in) + 2 H(+)(in). Functionally, proton-coupled amino-acid transporter that transports oligopeptides of 2 to 4 amino acids with a preference for dipeptides. Transports neutral and anionic dipeptides with a proton to peptide stoichiometry of 2:1 or 3:1. In kidney, involved in the absorption of circulating di- and tripeptides from the glomerular filtrate. Can also transport beta-lactam antibiotics, such as the aminocephalosporin cefadroxil, and other antiviral and anticancer drugs. Transports the dipeptide-like aminopeptidase inhibitor bestatin. Also able to transport carnosine. Involved in innate immunity by promoting the detection of microbial pathogens by NOD-like receptors (NLRs). Mediates transport of bacterial peptidoglycans across the plasma membrane or, in macrophages, the phagosome membrane: catalyzes the transport of certain bacterial peptidoglycans, such as muramyl dipeptide (MDP), the NOD2 ligand. The polypeptide is Solute carrier family 15 member 2 (Oryctolagus cuniculus (Rabbit)).